A 32-amino-acid polypeptide reads, in one-letter code: Photosystem II reaction center protein T (32 aa).

Residues 3–23 form a helical membrane-spanning segment; that stretch reads ALVYTFLLIGTLIVIFFAVFF.

Belongs to the PsbT family. As to quaternary structure, PSII is composed of 1 copy each of membrane proteins PsbA, PsbB, PsbC, PsbD, PsbE, PsbF, PsbH, PsbI, PsbJ, PsbK, PsbL, PsbM, PsbT, PsbX, PsbY, PsbZ, Psb30/Ycf12, at least 3 peripheral proteins of the oxygen-evolving complex and a large number of cofactors. It forms dimeric complexes.

Its subcellular location is the plastid. The protein resides in the chloroplast thylakoid membrane. Functionally, found at the monomer-monomer interface of the photosystem II (PS II) dimer, plays a role in assembly and dimerization of PSII. PSII is a light-driven water plastoquinone oxidoreductase, using light energy to abstract electrons from H(2)O, generating a proton gradient subsequently used for ATP formation. This Phaeodactylum tricornutum (strain CCAP 1055/1) protein is Photosystem II reaction center protein T.